The sequence spans 123 residues: Small ribosomal subunit protein uS12c (123 aa).

It belongs to the universal ribosomal protein uS12 family. In terms of assembly, part of the 30S ribosomal subunit.

The protein localises to the plastid. The protein resides in the chloroplast. In terms of biological role, with S4 and S5 plays an important role in translational accuracy. Located at the interface of the 30S and 50S subunits. This Anthoceros angustus (Hornwort) protein is Small ribosomal subunit protein uS12c (rps12).